The chain runs to 200 residues: Peptidyl-tRNA hydrolase (200 aa).

Tyrosine 15 is a binding site for tRNA. The active-site Proton acceptor is the histidine 20. The tRNA site is built by tyrosine 66, asparagine 68, and asparagine 114.

Belongs to the PTH family. As to quaternary structure, monomer.

Its subcellular location is the cytoplasm. It catalyses the reaction an N-acyl-L-alpha-aminoacyl-tRNA + H2O = an N-acyl-L-amino acid + a tRNA + H(+). Functionally, hydrolyzes ribosome-free peptidyl-tRNAs (with 1 or more amino acids incorporated), which drop off the ribosome during protein synthesis, or as a result of ribosome stalling. In terms of biological role, catalyzes the release of premature peptidyl moieties from peptidyl-tRNA molecules trapped in stalled 50S ribosomal subunits, and thus maintains levels of free tRNAs and 50S ribosomes. In Paraburkholderia phymatum (strain DSM 17167 / CIP 108236 / LMG 21445 / STM815) (Burkholderia phymatum), this protein is Peptidyl-tRNA hydrolase.